Here is a 284-residue protein sequence, read N- to C-terminus: MYGSCLLEKEAGMYPGTLMSPGGDGTAGTGGTGGGGSPMPASNFAAAPAFSHYMGYPHMPSMDPHWPSLGVWGSPYSPPREDWSVYPGPSSTMGTVPVNDVTSSPAAFCSTDYSNLGPVGGGTSGSSLPGQAGGSLVPTDAGAAKASSPSRSRHSPYAWMRKTVQVTGKTRTKEKYRVVYTDHQRLELEKEFHCNRYITIQRKSELAVNLGLSERQVKIWFQNRRAKERKMIKKKISQFENSGGSVQSDSDSISPGELPNTFFTTPSAVRGFQPIEIQQVIVSE.

2 disordered regions span residues 15-40 (PGTL…SPMP) and 120-155 (GGGT…SRHS). A compositionally biased stretch (gly residues) spans 22 to 37 (GGDGTAGTGGTGGGGS). The homeobox DNA-binding region spans 173–232 (KEKYRVVYTDHQRLELEKEFHCNRYITIQRKSELAVNLGLSERQVKIWFQNRRAKERKMI). Residues 238-253 (QFENSGGSVQSDSDSI) show a composition bias toward polar residues. The disordered stretch occupies residues 238–259 (QFENSGGSVQSDSDSISPGELP).

The protein belongs to the Caudal homeobox family.

The protein localises to the nucleus. The chain is Homeobox protein CDX-4 (CDX4) from Homo sapiens (Human).